A 115-amino-acid polypeptide reads, in one-letter code: UPF0235 protein CTA_0423 (115 aa).

It belongs to the UPF0235 family.

This Chlamydia trachomatis serovar A (strain ATCC VR-571B / DSM 19440 / HAR-13) protein is UPF0235 protein CTA_0423.